The chain runs to 115 residues: Large ribosomal subunit protein bL19 (115 aa).

It belongs to the bacterial ribosomal protein bL19 family.

Its function is as follows. This protein is located at the 30S-50S ribosomal subunit interface and may play a role in the structure and function of the aminoacyl-tRNA binding site. In Coxiella burnetii (strain CbuK_Q154) (Coxiella burnetii (strain Q154)), this protein is Large ribosomal subunit protein bL19.